Here is a 370-residue protein sequence, read N- to C-terminus: D-aspartate oxidase (370 aa).

Positions 15, 49, 50, 54, 166, 317, 346, and 348 each coordinate FAD. A Microbody targeting signal motif is present at residues 368–370; the sequence is ARL.

It belongs to the DAMOX/DASOX family. Homotetramer. It depends on FAD as a cofactor.

The protein resides in the peroxisome matrix. It catalyses the reaction D-aspartate + O2 + H2O = oxaloacetate + H2O2 + NH4(+). The catalysed reaction is D-glutamate + O2 + H2O = H2O2 + 2-oxoglutarate + NH4(+). Inhibited by malonate and D-malate. Very mildly inhibited by benzoate, ethylenediaminetetraacetic acid (EDTA), crotonate and anthranilate. May be very mildly inhibited by meso-tartrate. Functionally, selectively catalyzes the oxidative deamination of acidic amino acids. Protects the organism from the toxicity of D-amino acids. Enables the organism to utilize D-amino acids as a source of nutrients. Enables the organism to utilize D-aspartate as a source of nitrogen and carbon. The polypeptide is D-aspartate oxidase (Vanrija humicola (Yeast)).